The primary structure comprises 215 residues: Glutathione S-transferase D2 (215 aa).

The region spanning methionine 1–aspartate 80 is the GST N-terminal domain. Glutathione contacts are provided by residues histidine 50 to isoleucine 52 and glutamate 64 to arginine 66. The 127-residue stretch at aspartate 86 to leucine 212 folds into the GST C-terminal domain.

It belongs to the GST superfamily. Delta family. Homodimer.

The enzyme catalyses RX + glutathione = an S-substituted glutathione + a halide anion + H(+). In terms of biological role, conjugation of reduced glutathione to a wide number of exogenous and endogenous hydrophobic electrophiles. May be involved in detoxification. The sequence is that of Glutathione S-transferase D2 from Drosophila melanogaster (Fruit fly).